Consider the following 763-residue polypeptide: C6 finger domain transcription factor hasF (763 aa).

Positions 1–20 are enriched in low complexity; the sequence is MDSTTSSSRFSVSSPQSGPS. The disordered stretch occupies residues 1-25; it reads MDSTTSSSRFSVSSPQSGPSAGIQK. The segment at residues 34 to 61 is a DNA-binding region (zn(2)-C6 fungal-type); that stretch reads CLTCRRRKVKCDHAQPVCTPCQRGGRVC. 3 disordered regions span residues 68 to 91, 112 to 145, and 189 to 219; these read PVSQ…RSGQ, GGNM…PKCE, and DQSS…ESLT. Positions 80–89 are enriched in polar residues; the sequence is SRVSRTNLRS. Pro residues predominate over residues 197–209; sequence DSPPSDQPTPPFP.

It localises to the nucleus. Functionally, transcription factor; part of the gene cluster that mediates the biosynthesis of hexadehydro-astechrome (HAS), a tryptophan-derived iron(III)-complex that acts as a virulence factor in infected mice. Does not regulate the expression of the HAS biosynthetic genes (at least under the growth conditions tested). The chain is C6 finger domain transcription factor hasF from Aspergillus fumigatus (strain CBS 144.89 / FGSC A1163 / CEA10) (Neosartorya fumigata).